We begin with the raw amino-acid sequence, 585 residues long: Efflux pump dotC (585 aa).

Residues Met-1 to Glu-34 show a composition bias toward basic and acidic residues. Residues Met-1 to Leu-45 are disordered. Asn-10 carries N-linked (GlcNAc...) asparagine glycosylation. The segment covering Glu-35 to Ala-44 has biased composition (acidic residues). The helical transmembrane segment at Ser-51 to Leu-71 threads the bilayer. Asn-91 is a glycosylation site (N-linked (GlcNAc...) asparagine). 13 helical membrane passes run Ala-94–Trp-114, Ala-132–Thr-152, Gly-158–Leu-178, Gly-186–Phe-206, Trp-214–Leu-234, Phe-247–Phe-267, Ser-280–Val-300, Ala-323–Leu-343, Pro-353–Ala-373, Leu-385–Phe-405, Leu-414–Val-434, Thr-449–Tyr-471, and Ser-524–Val-544. The interval Lys-564–Ser-585 is disordered.

The protein belongs to the major facilitator superfamily. TCR/Tet family.

Its subcellular location is the cell membrane. The protein localises to the vacuole membrane. In terms of biological role, efflux pump; part of the gene cluster that mediates the biosynthesis of dothistromin (DOTH), a polyketide toxin very similar in structure to the aflatoxin precursor, versicolorin B. One function of dotC may be to transport early-stage dothistromin biosynthetic intermediates from the cytoplasm into vacuoles, thereby affecting the rate of dothistromin production. This chain is Efflux pump dotC, found in Dothistroma septosporum (Red band needle blight fungus).